The following is a 604-amino-acid chain: uncharacterized protein (604 aa).

It belongs to the glycosyltransferase 2 family.

This is an uncharacterized protein from Rickettsia conorii (strain ATCC VR-613 / Malish 7).